The sequence spans 164 residues: Transcriptional regulator MraZ (164 aa).

2 SpoVT-AbrB domains span residues H7–E60 and S83–R126. The interval L141–E164 is disordered. Residues A154–E164 show a composition bias toward pro residues.

The protein belongs to the MraZ family. In terms of assembly, forms oligomers.

Its subcellular location is the cytoplasm. It localises to the nucleoid. This chain is Transcriptional regulator MraZ, found in Beijerinckia indica subsp. indica (strain ATCC 9039 / DSM 1715 / NCIMB 8712).